Reading from the N-terminus, the 364-residue chain is Lipoyl synthase, mitochondrial (364 aa).

Positions 99, 104, 110, 130, 134, 137, and 345 each coordinate [4Fe-4S] cluster. A Radical SAM core domain is found at 116 to 334; that stretch reads HSTQTATIML…EQRGNELGFL (219 aa).

It belongs to the radical SAM superfamily. Lipoyl synthase family. [4Fe-4S] cluster serves as cofactor.

The protein resides in the mitochondrion. It carries out the reaction [[Fe-S] cluster scaffold protein carrying a second [4Fe-4S](2+) cluster] + N(6)-octanoyl-L-lysyl-[protein] + 2 oxidized [2Fe-2S]-[ferredoxin] + 2 S-adenosyl-L-methionine + 4 H(+) = [[Fe-S] cluster scaffold protein] + N(6)-[(R)-dihydrolipoyl]-L-lysyl-[protein] + 4 Fe(3+) + 2 hydrogen sulfide + 2 5'-deoxyadenosine + 2 L-methionine + 2 reduced [2Fe-2S]-[ferredoxin]. It functions in the pathway protein modification; protein lipoylation via endogenous pathway; protein N(6)-(lipoyl)lysine from octanoyl-[acyl-carrier-protein]: step 2/2. Functionally, catalyzes the radical-mediated insertion of two sulfur atoms into the C-6 and C-8 positions of the octanoyl moiety bound to the lipoyl domains of lipoate-dependent enzymes, thereby converting the octanoylated domains into lipoylated derivatives. The polypeptide is Lipoyl synthase, mitochondrial (Drosophila mojavensis (Fruit fly)).